Here is a 145-residue protein sequence, read N- to C-terminus: Ventricular natriuretic peptide (145 aa).

The first 24 residues, 1–24, serve as a signal peptide directing secretion; it reads MRMGKIAVGYGFLLLLVFQLGVRA. Cysteine 117 and cysteine 133 are disulfide-bonded.

The protein belongs to the natriuretic peptide family. As to expression, heart atrium and ventricle, and to a very low extent in brain.

The protein resides in the secreted. Functionally, exhibits natriuretic and vasodepressor activity. This is Ventricular natriuretic peptide (vnp) from Acipenser transmontanus (White sturgeon).